The following is a 165-amino-acid chain: MKTPRLPIAIQQAVMRRLRENLAQANLKLNRHYPEPKLVYTQRGTSAGTAWLESYEIRLNPVLLMENVDAFIAEVVPHELAHLLVWKHFGRKAPHGKEWKWMMESVLGVPARRTHQFELQSVRRNTFPYHCQCQQHQLTVRRHNRVVRGEAVYRCVHCGEPLVAG.

The SprT-like domain occupies 20–163 (ENLAQANLKL…RCVHCGEPLV (144 aa)). H78 provides a ligand contact to Zn(2+). E79 is an active-site residue. H82 contacts Zn(2+).

Belongs to the SprT family. It depends on Zn(2+) as a cofactor.

The protein localises to the cytoplasm. This chain is Protein SprT, found in Salmonella arizonae (strain ATCC BAA-731 / CDC346-86 / RSK2980).